The following is a 115-amino-acid chain: Large ribosomal subunit protein bL19 (115 aa).

Belongs to the bacterial ribosomal protein bL19 family.

In terms of biological role, this protein is located at the 30S-50S ribosomal subunit interface and may play a role in the structure and function of the aminoacyl-tRNA binding site. The protein is Large ribosomal subunit protein bL19 of Edwardsiella ictaluri (strain 93-146).